The sequence spans 414 residues: Putative polyketide beta-ketoacyl synthase 2 (414 aa).

Residues 4-407 form the Ketosynthase family 3 (KS3) domain; that stretch reads PRRAVVTGLG…GNNSALVLRR (404 aa).

It belongs to the thiolase-like superfamily. Beta-ketoacyl-ACP synthases family.

Functionally, involved in developmentally regulated synthesis of a compound biosynthetically related to polyketide antibiotics which is essential for spore color in Streptomyces halstedii. The chain is Putative polyketide beta-ketoacyl synthase 2 (sch2) from Streptomyces halstedii.